A 300-amino-acid chain; its full sequence is MTMKTHLQRLEAESIHIMREVVAQFRKPVMLYSIGKDSSVMLHLALKAFYPGKPPFPLLHVDTTWKFREMIVFRDQRVKALGLDLRVHINQEGIAQGITPFNQSASIYTDIMKTQSLKQALEQGGFDAAFGGARRDEEKSRAKERIFSFRTPNHRWDPKNQRPELWNLYNGRIAPGESIRVFPLSNWTELDIWQYIHQEQIPVVPLYFAQPRPVVVRHGALIMVDDGRMPLLPGEEPSLRSVRFRTLGCYPLTGAVESTTTDVAGIIGEMLVAHRSEREGRVIDHDGGASMEEKKQEGYF.

Belongs to the PAPS reductase family. CysD subfamily. In terms of assembly, heterodimer composed of CysD, the smaller subunit, and CysN.

The enzyme catalyses sulfate + ATP + H(+) = adenosine 5'-phosphosulfate + diphosphate. The protein operates within sulfur metabolism; hydrogen sulfide biosynthesis; sulfite from sulfate: step 1/3. In terms of biological role, with CysN forms the ATP sulfurylase (ATPS) that catalyzes the adenylation of sulfate producing adenosine 5'-phosphosulfate (APS) and diphosphate, the first enzymatic step in sulfur assimilation pathway. APS synthesis involves the formation of a high-energy phosphoric-sulfuric acid anhydride bond driven by GTP hydrolysis by CysN coupled to ATP hydrolysis by CysD. The chain is Sulfate adenylyltransferase subunit 2 from Magnetococcus marinus (strain ATCC BAA-1437 / JCM 17883 / MC-1).